The following is an 876-amino-acid chain: Senescence-induced receptor-like serine/threonine-protein kinase (876 aa).

The first 24 residues, 1–24 (MAMLKSLSSILFTSFALLFFLVHA), serve as a signal peptide directing secretion. At 25 to 517 (QDQSGFISID…SNTKKKNKNG (493 aa)) the chain is on the extracellular side. LRR repeat units follow at residues 415 to 438 (RVVS…SNLT), 439 to 462 (SIRK…ANLP), and 463 to 483 (NLTE…QRLH). Residues 518-538 (YIIPLVVVGIIVVLLTALALF) traverse the membrane as a helical segment. Over 539-876 (RRFKKKQQRG…LDTEMVPRAR (338 aa)) the chain is Cytoplasmic. One can recognise a Protein kinase domain in the interval 574–847 (NNFERVIGKG…VVMELKQIVY (274 aa)). Residues 580–588 (IGKGGFGKV) and lysine 601 contribute to the ATP site. Position 646 is a phosphotyrosine (tyrosine 646). The Proton acceptor role is filled by aspartate 697. Serine 731 carries the phosphoserine modification. Residue threonine 732 is modified to Phosphothreonine. Tyrosine 745 carries the post-translational modification Phosphotyrosine.

The protein belongs to the protein kinase superfamily. Ser/Thr protein kinase family.

Its subcellular location is the membrane. Involved in innate immune response of plants. This is Senescence-induced receptor-like serine/threonine-protein kinase (SIRK) from Arabidopsis thaliana (Mouse-ear cress).